A 274-amino-acid chain; its full sequence is NH(3)-dependent NAD(+) synthetase (274 aa).

Residue 27–34 (GLSGGIDS) coordinates ATP. D33 contributes to the Mg(2+) binding site. R121 is a binding site for deamido-NAD(+). T141 contributes to the ATP binding site. A Mg(2+)-binding site is contributed by E146. 2 residues coordinate ATP: K170 and S192.

This sequence belongs to the NAD synthetase family. As to quaternary structure, homodimer.

The catalysed reaction is deamido-NAD(+) + NH4(+) + ATP = AMP + diphosphate + NAD(+) + H(+). The protein operates within cofactor biosynthesis; NAD(+) biosynthesis; NAD(+) from deamido-NAD(+) (ammonia route): step 1/1. In terms of biological role, catalyzes the ATP-dependent amidation of deamido-NAD to form NAD. Uses ammonia as a nitrogen source. The polypeptide is NH(3)-dependent NAD(+) synthetase (Helicobacter hepaticus (strain ATCC 51449 / 3B1)).